Consider the following 267-residue polypeptide: Pyrroline-5-carboxylate reductase (267 aa).

It belongs to the pyrroline-5-carboxylate reductase family.

It is found in the cytoplasm. It catalyses the reaction L-proline + NADP(+) = (S)-1-pyrroline-5-carboxylate + NADPH + 2 H(+). The catalysed reaction is L-proline + NAD(+) = (S)-1-pyrroline-5-carboxylate + NADH + 2 H(+). It functions in the pathway amino-acid biosynthesis; L-proline biosynthesis; L-proline from L-glutamate 5-semialdehyde: step 1/1. Catalyzes the reduction of 1-pyrroline-5-carboxylate (PCA) to L-proline. This is Pyrroline-5-carboxylate reductase from Synechocystis sp. (strain ATCC 27184 / PCC 6803 / Kazusa).